The sequence spans 492 residues: Catalase-1/2 (492 aa).

Active-site residues include His65 and Asn138. Position 348 (Tyr348) interacts with heme.

It belongs to the catalase family. In terms of assembly, homotetramer. The cofactor is heme.

The protein localises to the cytoplasm. It localises to the cytosol. The protein resides in the peroxisome matrix. It carries out the reaction 2 H2O2 = O2 + 2 H2O. Functionally, catalyzes the degradation of hydrogen peroxide (H(2)O(2)) generated by peroxisomal oxidases to water and oxygen, thereby protecting cells from the toxic effects of hydrogen peroxide. This chain is Catalase-1/2 (CAT1), found in Glycine max (Soybean).